Consider the following 386-residue polypeptide: mRNA-capping enzyme subunit beta (386 aa).

The segment at 1-137 (MDIGKMINDD…TTTITGCPPS (137 aa)) is disordered. Composition is skewed to polar residues over residues 20-32 (VKSLLNSPPTGLP) and 41-56 (KASSTSDLAQQLTNEM). Residues 57–67 (ESGEDDDDEDA) show a composition bias toward acidic residues. Basic and acidic residues predominate over residues 93–115 (RHAERDHRPPPHRQDRRDPRMER).

It belongs to the fungal TPase family. In terms of assembly, heterodimer. The mRNA-capping enzyme is composed of two separate chains alpha and beta, respectively a mRNA guanylyltransferase and an mRNA 5'-triphosphate monophosphatase. Mg(2+) serves as cofactor.

The protein resides in the nucleus. It catalyses the reaction a 5'-end triphospho-ribonucleoside in mRNA + H2O = a 5'-end diphospho-ribonucleoside in mRNA + phosphate + H(+). Its function is as follows. First step of mRNA capping. Converts the 5'-triphosphate end of a nascent mRNA chain into a diphosphate end. This is mRNA-capping enzyme subunit beta (CET1) from Yarrowia lipolytica (strain CLIB 122 / E 150) (Yeast).